Consider the following 777-residue polypeptide: Polyribonucleotide nucleotidyltransferase (777 aa).

2 residues coordinate Mg(2+): D494 and D500. One can recognise a KH domain in the interval 561–620; sequence PRIITLQIDPSKIGALIGPGGKTIRSIIEQTGAQIDVEDDGRVFVTTPDADGARMAQSLI. Residues 630–699 enclose the S1 motif domain; sequence GEIFTGKVVR…GTGKLSLSRR (70 aa). Residues 703-777 form a disordered region; it reads TGETAEQRKS…NDRRGGGFRG (75 aa). Positions 718–727 are enriched in gly residues; the sequence is GPRGGGGGGD. 2 stretches are compositionally biased toward basic and acidic residues: residues 728 to 761 and 768 to 777; these read RGPR…DRGP and NDRRGGGFRG.

It belongs to the polyribonucleotide nucleotidyltransferase family. Requires Mg(2+) as cofactor.

It is found in the cytoplasm. It carries out the reaction RNA(n+1) + phosphate = RNA(n) + a ribonucleoside 5'-diphosphate. Functionally, involved in mRNA degradation. Catalyzes the phosphorolysis of single-stranded polyribonucleotides processively in the 3'- to 5'-direction. The protein is Polyribonucleotide nucleotidyltransferase of Herpetosiphon aurantiacus (strain ATCC 23779 / DSM 785 / 114-95).